The sequence spans 332 residues: Biotin synthase (332 aa).

One can recognise a Radical SAM core domain in the interval 53–283 (WGKGGVHACS…VHPRKTIKFA (231 aa)). Residues C71, C75, and C78 each contribute to the [4Fe-4S] cluster site. Positions 150, 211, and 281 each coordinate [2Fe-2S] cluster.

This sequence belongs to the radical SAM superfamily. Biotin synthase family. Homodimer. Requires [4Fe-4S] cluster as cofactor. The cofactor is [2Fe-2S] cluster.

It carries out the reaction (4R,5S)-dethiobiotin + (sulfur carrier)-SH + 2 reduced [2Fe-2S]-[ferredoxin] + 2 S-adenosyl-L-methionine = (sulfur carrier)-H + biotin + 2 5'-deoxyadenosine + 2 L-methionine + 2 oxidized [2Fe-2S]-[ferredoxin]. It participates in cofactor biosynthesis; biotin biosynthesis; biotin from 7,8-diaminononanoate: step 2/2. Its function is as follows. Catalyzes the conversion of dethiobiotin (DTB) to biotin by the insertion of a sulfur atom into dethiobiotin via a radical-based mechanism. The polypeptide is Biotin synthase (Chlorobium luteolum (strain DSM 273 / BCRC 81028 / 2530) (Pelodictyon luteolum)).